The chain runs to 964 residues: Coatomer subunit beta (964 aa).

HEAT repeat units follow at residues 129–166, 238–275, 314–351, 393–430, and 466–506; these read ELLEPLMPAIRACLDHRHSYVRRNAVLAIFTIYKNFDW, AERSRFIRCIYNLLNSSSNAVRYESAGTLITLSLAPTA, KVMQDLVMDVLRVLAAPDIEVRRKTLALALDLVYSRNI, DVAANVIPVLVEFLSDTNELAAADVLIFIREAIQKFPA, and SQIL…QQGS. Residues 490–501 are compositionally biased toward basic and acidic residues; sequence RRLAGDQTEEQK. Residues 490–530 form a disordered region; that stretch reads RRLAGDQTEEQKQQQGSAGGNAAGSAAEGSGSGNASNKVTS. Residues 512 to 526 show a composition bias toward low complexity; the sequence is AGSAAEGSGSGNASN.

As to quaternary structure, oligomeric complex that consists of at least the alpha, beta, beta', gamma, delta, epsilon and zeta subunits. As to expression, during oogenesis and spermatogenesis, expressed in ovariole, germarium, testis tip and testis.

The protein localises to the cytoplasm. Its subcellular location is the golgi apparatus membrane. It localises to the cytoplasmic vesicle. The protein resides in the COPI-coated vesicle membrane. The coatomer is a cytosolic protein complex that binds to dilysine motifs and reversibly associates with Golgi non-clathrin-coated vesicles, which further mediate biosynthetic protein transport from the ER, via the Golgi up to the trans Golgi network. Coatomer complex is required for budding from Golgi membranes, and is essential for the retrograde Golgi-to-ER transport of dilysine-tagged proteins. Required for limiting lipid storage in lipid droplets. This is Coatomer subunit beta from Drosophila melanogaster (Fruit fly).